We begin with the raw amino-acid sequence, 125 residues long: Holo-[acyl-carrier-protein] synthase (125 aa).

2 residues coordinate Mg(2+): D8 and E57.

Belongs to the P-Pant transferase superfamily. AcpS family. Mg(2+) is required as a cofactor.

The protein resides in the cytoplasm. The enzyme catalyses apo-[ACP] + CoA = holo-[ACP] + adenosine 3',5'-bisphosphate + H(+). Its function is as follows. Transfers the 4'-phosphopantetheine moiety from coenzyme A to a Ser of acyl-carrier-protein. This Nitrosomonas europaea (strain ATCC 19718 / CIP 103999 / KCTC 2705 / NBRC 14298) protein is Holo-[acyl-carrier-protein] synthase.